The sequence spans 180 residues: Immediate early response gene 2 protein (180 aa).

Residues 53–135 (MSEKSGQSVT…KRRSKTATDS (83 aa)) form a disordered region. The segment covering 56–92 (KSGQSVTEECTSHTQEPMDTSSSTATPLRETSGQSSE) has biased composition (polar residues). The span at 93–103 (DGQRSGLEGHP) shows a compositional bias: basic and acidic residues.

Belongs to the IER family. As to quaternary structure, interacts with FIBPB.

It is found in the nucleus. The protein resides in the cytoplasm. DNA-binding protein that seems to act as a transcription factor. Mediates with FIBPB FGF-signaling in Kupffer's vesicle ciliogenesis and in the establishment of laterality in the embryo. In Danio rerio (Zebrafish), this protein is Immediate early response gene 2 protein.